Consider the following 185-residue polypeptide: Translocon-associated protein subunit gamma (185 aa).

The residue at position 1 (Met1) is an N-acetylmethionine. Over 1-27 the chain is Lumenal; that stretch reads MAPKGSCKQQSEEDLLLQDFSRNLSAK. Ser11 carries the phosphoserine modification. A helical membrane pass occupies residues 28–48; that stretch reads SSALFFGNAFIVSAIPIWLYW. Residues 49 to 54 are Cytoplasmic-facing; sequence RIWHMD. A helical transmembrane segment spans residues 55–76; the sequence is LIQSAVLYSVMTLVSTYLVAFA. Over 77-135 the chain is Lumenal; it reads YKNVKFVLKHKVAQKREDAVSKEVTRKLSEADNRKMSRKEKDERILWKKNEVADYEATT. Position 105 is a phosphoserine (Ser105). Residues 136–157 form a helical membrane-spanning segment; that stretch reads FSIFYNNTLFLVVVIVASFFIL. The Cytoplasmic segment spans residues 158 to 163; it reads KNFNPT. A helical membrane pass occupies residues 164-184; sequence VNYILSISASSGLIALLSTGS.

This sequence belongs to the TRAP-gamma family. Heterotetramer of TRAP-alpha, TRAP-beta, TRAP-delta and TRAP-gamma.

The protein resides in the endoplasmic reticulum membrane. Functionally, TRAP proteins are part of a complex whose function is to bind calcium to the ER membrane and thereby regulate the retention of ER resident proteins. This is Translocon-associated protein subunit gamma (SSR3) from Pongo abelii (Sumatran orangutan).